Reading from the N-terminus, the 488-residue chain is Probable glycine dehydrogenase (decarboxylating) subunit 2 (488 aa).

Position 264 is an N6-(pyridoxal phosphate)lysine (K264).

The protein belongs to the GcvP family. C-terminal subunit subfamily. In terms of assembly, the glycine cleavage system is composed of four proteins: P, T, L and H. In this organism, the P 'protein' is a heterodimer of two subunits. Requires pyridoxal 5'-phosphate as cofactor.

It catalyses the reaction N(6)-[(R)-lipoyl]-L-lysyl-[glycine-cleavage complex H protein] + glycine + H(+) = N(6)-[(R)-S(8)-aminomethyldihydrolipoyl]-L-lysyl-[glycine-cleavage complex H protein] + CO2. The glycine cleavage system catalyzes the degradation of glycine. The P protein binds the alpha-amino group of glycine through its pyridoxal phosphate cofactor; CO(2) is released and the remaining methylamine moiety is then transferred to the lipoamide cofactor of the H protein. In Methylococcus capsulatus (strain ATCC 33009 / NCIMB 11132 / Bath), this protein is Probable glycine dehydrogenase (decarboxylating) subunit 2.